Consider the following 351-residue polypeptide: SKP1-like protein 21 (351 aa).

The interval 108-167 is interaction with the F-box domain of F-box proteins; the sequence is TSAADSLQLKPLVDLTSRALARIIEGKTPEEIREIFHLPDDLTEEEKLEPLKNTMDDPRI. 2 disordered regions span residues 216–240 and 330–351; these read VKTS…NGTC and VNFS…AGHK. A compositionally biased stretch (basic residues) spans 217 to 230; it reads KTSKSKKKNKKRKE. The segment covering 330–342 has biased composition (polar residues); that stretch reads VNFSINGNGTSRR.

Belongs to the SKP1 family. In terms of assembly, part of a SCF (SKP1-cullin-F-box) protein ligase complex. Expressed in young seedlings, roots, leaves, floral stems, inflorescences, and siliques.

It localises to the nucleus. Its pathway is protein modification; protein ubiquitination. Its function is as follows. Involved in ubiquitination and subsequent proteasomal degradation of target proteins. Together with CUL1, RBX1 and a F-box protein, it forms a SCF E3 ubiquitin ligase complex. The functional specificity of this complex depends on the type of F-box protein. In the SCF complex, it serves as an adapter that links the F-box protein to CUL1. The chain is SKP1-like protein 21 (ASK21) from Arabidopsis thaliana (Mouse-ear cress).